The primary structure comprises 1837 residues: AF4/FMR2 family member lilli (1837 aa).

Disordered stretches follow at residues 1-25, 65-109, 162-295, 455-592, 605-712, 797-852, 868-1250, 1267-1311, and 1344-1466; these read MAQQ…QQQQ, NLYS…PRRL, IQQQ…LHNG, QQLP…KKKY, TGLL…PGNV, PKSQ…LQIP, NNMQ…GGAK, QQQQ…GLAS, and APSS…DPML. The segment covering 16-25 has biased composition (low complexity); that stretch reads HQQQQQQQQQ. Positions 84 to 109 are enriched in basic and acidic residues; that stretch reads REKYERQQGIQSDDRETSLFSEPRRL. Composition is skewed to low complexity over residues 162–179, 187–200, and 247–264; these read IQQQ…VASS, QTQQ…QQQQ, and NSNS…SSSS. At Thr-468 the chain carries Phosphothreonine. The span at 475 to 488 shows a compositional bias: basic and acidic residues; the sequence is LKIEKNPILEKQDS. Residues 490 to 500 are compositionally biased toward acidic residues; it reads LENDLELSESE. Residues Ser-497 and Ser-499 each carry the phosphoserine modification. 2 stretches are compositionally biased toward low complexity: residues 509 to 529 and 542 to 552; these read SPGS…SESS and QQQQQTQQQQL. Residues 553 to 563 are compositionally biased toward basic residues; the sequence is HGHHPQSHHHQ. Positions 564–583 are enriched in low complexity; sequence QFLQQQLQRQQQQQQQQQQL. Gly residues-rich tracts occupy residues 612–633 and 641–673; these read GGLG…GNGG and GSMG…GIGS. Polar residues-rich tracts occupy residues 678 to 690 and 698 to 711; these read NKTP…NKWN and PTSQ…SPGN. Positions 815–837 are enriched in low complexity; the sequence is SESATSGSSSSSCSSSDSAASAS. The span at 868-880 shows a compositional bias: polar residues; sequence NNMQKSQSMSVTV. A compositionally biased stretch (basic residues) spans 892–902; sequence PRQKKPRKKKM. Residues Ser-913 and Ser-914 each carry the phosphoserine modification. Low complexity-rich tracts occupy residues 927-951 and 961-1013; these read VVAQ…ATTT and QQQQ…SSVL. Positions 952-964 form a DNA-binding region, a.T hook; sequence KKGRGRPRKQQQQ. Phosphoserine is present on residues Ser-974 and Ser-976. A compositionally biased stretch (polar residues) spans 1021 to 1033; the sequence is SQSSSNGNTPTKK. Low complexity-rich tracts occupy residues 1034 to 1049, 1056 to 1091, 1130 to 1139, and 1157 to 1173; these read MSSI…SAAA, AVAA…SSSS, GSSSPTSSSS, and ISNS…VNNN. Positions 1174-1184 are enriched in polar residues; the sequence is LQQQAMPQQSP. Over residues 1189–1212 the composition is skewed to low complexity; the sequence is LSGGSQQLSSSDSSSSSSGSSSSS. Over residues 1217-1234 the composition is skewed to basic and acidic residues; sequence DAKREKNRERKPKSDKNK. Residues 1267–1276 show a composition bias toward low complexity; that stretch reads QQQQQQQQVQ. A compositionally biased stretch (polar residues) spans 1345–1355; that stretch reads PSSSNQQNGHL. Over residues 1373 to 1386 the composition is skewed to basic residues; that stretch reads KVKHEHHQLHHHSQ. Basic and acidic residues-rich tracts occupy residues 1393-1407 and 1416-1432; these read VKPE…ETKF and FQLK…ERDQ. Ser-1517 is subject to Phosphoserine. Over residues 1550 to 1560 the composition is skewed to polar residues; sequence AVQTTPPTSVT. 2 disordered regions span residues 1550 to 1571 and 1727 to 1756; these read AVQT…LVSQ and GNTP…IVPQ. Positions 1727–1747 are enriched in low complexity; sequence GNTPSSISPSNSVGSQGSGSN.

This sequence belongs to the AF4 family.

The protein localises to the nucleus. In terms of biological role, has a role in transcriptional regulation. Acts in parallel with the Ras/MAPK and the PI3K/PKB pathways in the control of cell identity and cellular growth. Essential for regulation of the cytoskeleton and cell growth but not for cell proliferation or growth rate. Required specifically for the microtubule-based basal transport of lipid droplets. Plays a partially redundant function downstream of Raf in cell fate specification in the developing eye. Pair-rule protein that regulates embryonic cellularization, gastrulation and segmentation. This chain is AF4/FMR2 family member lilli, found in Drosophila willistoni (Fruit fly).